A 194-amino-acid chain; its full sequence is UPF0215 protein Mbar_A0619 (194 aa).

This sequence belongs to the UPF0215 family.

This Methanosarcina barkeri (strain Fusaro / DSM 804) protein is UPF0215 protein Mbar_A0619.